Consider the following 200-residue polypeptide: MSYLRPALVLLILLTLITGIAYPLLTTGLAHLMFSQQASGSLARLGDNVVGSTLIGQNFTQPGYFTGRPSATADRPYNPMASGGSNLASSNPALGQAIGERVKLQRQANPTQLGPVPVDLVTASGSGLDPHISLAAAYYQAPRIASIRQMPLSDVQQLIDNSMQKAIPSFFGEPVVNVLNLNMALDSHSHVKVPANPAKP.

A helical membrane pass occupies residues 6–26; that stretch reads PALVLLILLTLITGIAYPLLT.

The protein belongs to the KdpC family. The system is composed of three essential subunits: KdpA, KdpB and KdpC.

The protein resides in the cell inner membrane. In terms of biological role, part of the high-affinity ATP-driven potassium transport (or Kdp) system, which catalyzes the hydrolysis of ATP coupled with the electrogenic transport of potassium into the cytoplasm. This subunit acts as a catalytic chaperone that increases the ATP-binding affinity of the ATP-hydrolyzing subunit KdpB by the formation of a transient KdpB/KdpC/ATP ternary complex. This Yersinia pseudotuberculosis serotype O:1b (strain IP 31758) protein is Potassium-transporting ATPase KdpC subunit.